A 336-amino-acid polypeptide reads, in one-letter code: Hdr-like menaquinol oxidoreductase cytochrome b-like subunit (336 aa).

A run of 6 helical transmembrane segments spans residues 4–24 (ALYI…IGTI), 60–80 (IDSP…VFLF), 102–122 (WLWL…IRHL), 145–165 (VAIV…LAFL), 184–204 (HLIL…RYII), and 232–252 (LHWL…YIPF).

It is found in the cell membrane. Its function is as follows. Has menaquinol-oxidizing activity. The HmeC and HmeD subunits may together mediate electron transfer from menaquinol to an unidentified electron acceptor on the cytoplasmic side of the membrane. In Archaeoglobus profundus (strain DSM 5631 / JCM 9629 / NBRC 100127 / Av18), this protein is Hdr-like menaquinol oxidoreductase cytochrome b-like subunit (hmeC).